Here is a 525-residue protein sequence, read N- to C-terminus: Ankyrin repeat domain-containing protein SOWAHC (525 aa).

Residues 84–263 (CEGPSEPSGD…EESSGGGSVT (180 aa)) form a disordered region. Ser-88 is modified (phosphoserine). The span at 101 to 112 (AEPEAPDGPAGP) shows a compositional bias: low complexity. 3 positions are modified to phosphoserine: Ser-126, Ser-213, and Ser-226. Gly residues predominate over residues 230-241 (SSGGGRGRGGGD). Residues 242–251 (SDSASVASSS) show a composition bias toward low complexity. 2 ANK repeats span residues 301-330 (TGFT…KHQL) and 340-370 (GGYT…DVDI). The interval 434–525 (DGGDHHHHHH…TLRPKSNVFG (92 aa)) is disordered. Residues 468–477 (IKPRLNKIRF) are compositionally biased toward basic residues. Residues 489–509 (RDPEQPLEGRGEEGVGEERPV) show a composition bias toward basic and acidic residues.

The protein belongs to the SOWAH family.

The protein is Ankyrin repeat domain-containing protein SOWAHC (SOWAHC) of Homo sapiens (Human).